The sequence spans 333 residues: Cap-specific mRNA (nucleoside-2'-O-)-methyltransferase (333 aa).

Residue Tyr-22 participates in mRNA binding. Positions 39, 66, 68, 72, 95, 97, 116, and 138 each coordinate S-adenosyl-L-methionine. Residues 169–249 are binding to NPH-I; the sequence is PVASSLKWRC…NKIVRNKVVI (81 aa). Catalysis depends on Lys-175, which acts as the For methyltransferase activity. MRNA is bound by residues 177-180, Asp-182, 205-207, and Glu-233; these read RCPF and SAE. Basic and acidic residues predominate over residues 305 to 320; sequence SHEPIQRKISSKDSMS. The segment at 305-333 is disordered; the sequence is SHEPIQRKISSKDSMSKNRNSKRSVRGNK. The segment covering 323–333 has biased composition (basic residues); that stretch reads RNSKRSVRGNK.

This sequence belongs to the class I-like SAM-binding methyltransferase superfamily. Poxvirus/kinetoplastid 2'-O-MTase family. As to quaternary structure, interacts with poly(A) polymerase catalytic subunit OPG063. Interacts with OPG109 and OPG123; these interactions might help linking transcription to capping and polyadenylation.

It is found in the virion. It carries out the reaction a 5'-end (N(7)-methyl 5'-triphosphoguanosine)-ribonucleoside in mRNA + S-adenosyl-L-methionine = a 5'-end (N(7)-methyl 5'-triphosphoguanosine)-(2'-O-methyl-ribonucleoside) in mRNA + S-adenosyl-L-homocysteine + H(+). Functionally, displays methyltransferase, positive regulation of the poly(A) polymerase and transcription elongation activities. Involved in the modification of both mRNA ends and in intermediate and late gene positive transcription elongation. At the mRNAs 5' end, methylates the ribose 2' OH group of the first transcribed nucleotide, thereby producing a 2'-O-methylpurine cap. At the 3' end, functions as a processivity factor which stimulates the activity of the viral poly(A) polymerase OPG063 that creates mRNA's poly(A) tail. In the presence of OPG102, OPG063 does not dissociate from the RNA allowing tail elongation to around 250 adenylates. The sequence is that of Cap-specific mRNA (nucleoside-2'-O-)-methyltransferase (OPG102) from Cynomys gunnisoni (Gunnison's prairie dog).